A 158-amino-acid chain; its full sequence is Protein Smg homolog (158 aa).

It belongs to the Smg family.

In Thioalkalivibrio sulfidiphilus (strain HL-EbGR7), this protein is Protein Smg homolog.